Reading from the N-terminus, the 147-residue chain is Large ribosomal subunit protein bL9 (147 aa).

The protein belongs to the bacterial ribosomal protein bL9 family.

In terms of biological role, binds to the 23S rRNA. This is Large ribosomal subunit protein bL9 from Geobacter sp. (strain M21).